The chain runs to 1222 residues: ATP-dependent helicase/nuclease subunit A (1222 aa).

Residues 39–495 (QKRTAQQIEA…ILLKENFRSQ (457 aa)) enclose the UvrD-like helicase ATP-binding domain. Residue 60–67 (ASAGSGKT) participates in ATP binding. In terms of domain architecture, UvrD-like helicase C-terminal spans 524-810 (QLIAGSHAQT…NLMTIHKSKG (287 aa)).

The protein belongs to the helicase family. AddA subfamily. Heterodimer of AddA and AddB/RexB. Requires Mg(2+) as cofactor.

The enzyme catalyses Couples ATP hydrolysis with the unwinding of duplex DNA by translocating in the 3'-5' direction.. It catalyses the reaction ATP + H2O = ADP + phosphate + H(+). Its function is as follows. The heterodimer acts as both an ATP-dependent DNA helicase and an ATP-dependent, dual-direction single-stranded exonuclease. Recognizes the chi site generating a DNA molecule suitable for the initiation of homologous recombination. The AddA nuclease domain is required for chi fragment generation; this subunit has the helicase and 3' -&gt; 5' nuclease activities. This is ATP-dependent helicase/nuclease subunit A from Streptococcus pyogenes serotype M12 (strain MGAS9429).